We begin with the raw amino-acid sequence, 393 residues long: NAD(P)H-quinone oxidoreductase subunit H, chloroplastic (393 aa).

It belongs to the complex I 49 kDa subunit family. NDH is composed of at least 16 different subunits, 5 of which are encoded in the nucleus.

It localises to the plastid. The protein resides in the chloroplast thylakoid membrane. The enzyme catalyses a plastoquinone + NADH + (n+1) H(+)(in) = a plastoquinol + NAD(+) + n H(+)(out). The catalysed reaction is a plastoquinone + NADPH + (n+1) H(+)(in) = a plastoquinol + NADP(+) + n H(+)(out). In terms of biological role, NDH shuttles electrons from NAD(P)H:plastoquinone, via FMN and iron-sulfur (Fe-S) centers, to quinones in the photosynthetic chain and possibly in a chloroplast respiratory chain. The immediate electron acceptor for the enzyme in this species is believed to be plastoquinone. Couples the redox reaction to proton translocation, and thus conserves the redox energy in a proton gradient. This Trifolium subterraneum (Subterranean clover) protein is NAD(P)H-quinone oxidoreductase subunit H, chloroplastic.